A 237-amino-acid chain; its full sequence is Large ribosomal subunit protein uL3 (237 aa).

Disordered regions lie at residues 133-155 (ASHGNSITHRSHGSTGQRQDPGK) and 213-237 (PENAPKPAGLRAGAKAEAAATEGGE). Positions 135-150 (HGNSITHRSHGSTGQR) are enriched in polar residues. Gln151 is modified (N5-methylglutamine). Positions 220–237 (AGLRAGAKAEAAATEGGE) are enriched in low complexity.

This sequence belongs to the universal ribosomal protein uL3 family. As to quaternary structure, part of the 50S ribosomal subunit. Forms a cluster with proteins L14 and L19. In terms of processing, methylated by PrmB.

Its function is as follows. One of the primary rRNA binding proteins, it binds directly near the 3'-end of the 23S rRNA, where it nucleates assembly of the 50S subunit. The chain is Large ribosomal subunit protein uL3 from Brucella abortus (strain S19).